The chain runs to 157 residues: Phosphopantetheine adenylyltransferase (157 aa).

T10 contributes to the substrate binding site. ATP is bound by residues T10 to F11 and H18. K42, L74, and R88 together coordinate substrate. Residues G89–R91, E99, and N124–S130 each bind ATP.

This sequence belongs to the bacterial CoaD family. Homohexamer. The cofactor is Mg(2+).

The protein localises to the cytoplasm. The catalysed reaction is (R)-4'-phosphopantetheine + ATP + H(+) = 3'-dephospho-CoA + diphosphate. Its pathway is cofactor biosynthesis; coenzyme A biosynthesis; CoA from (R)-pantothenate: step 4/5. Functionally, reversibly transfers an adenylyl group from ATP to 4'-phosphopantetheine, yielding dephospho-CoA (dPCoA) and pyrophosphate. This is Phosphopantetheine adenylyltransferase from Helicobacter pylori (strain J99 / ATCC 700824) (Campylobacter pylori J99).